The sequence spans 651 residues: Beta-glucuronidase (651 aa).

The N-terminal stretch at 1-22 (MARGSAVAWAAFGPLLWGCALG) is a signal peptide. 4 N-linked (GlcNAc...) asparagine glycosylation sites follow: asparagine 173, asparagine 190, asparagine 272, and asparagine 420. Glutamate 451 serves as the catalytic Proton donor. N-linked (GlcNAc...) asparagine glycosylation occurs at asparagine 631.

This sequence belongs to the glycosyl hydrolase 2 family. As to quaternary structure, homotetramer.

It is found in the lysosome. It catalyses the reaction a beta-D-glucuronoside + H2O = D-glucuronate + an alcohol. With respect to regulation, inhibited by L-aspartic acid. Its function is as follows. Plays an important role in the degradation of dermatan and keratan sulfates. This chain is Beta-glucuronidase (GUSB), found in Pongo abelii (Sumatran orangutan).